Here is a 123-residue protein sequence, read N- to C-terminus: MAPTGQVAKKGSKKAVKPPRASGGKKRHRKRKESYGIYIYKVLKQVHPDTGVSSRAMTIMNSFVNDIFERIAGEASRLTQYNKKSTISSREIQTAVRLLLPGELAKHAVSEGTKAVTKYTTAK.

The segment at 1–32 (MAPTGQVAKKGSKKAVKPPRASGGKKRHRKRK) is disordered. A compositionally biased stretch (basic residues) spans 10–32 (KGSKKAVKPPRASGGKKRHRKRK). Ser110 carries an O-linked (GlcNAc) serine glycan. Lys118 is covalently cross-linked (Glycyl lysine isopeptide (Lys-Gly) (interchain with G-Cter in ubiquitin)).

It belongs to the histone H2B family. As to quaternary structure, the nucleosome is a histone octamer containing two molecules each of H2A, H2B, H3 and H4 assembled in one H3-H4 heterotetramer and two H2A-H2B heterodimers. The octamer wraps approximately 147 bp of DNA. Post-translationally, monoubiquitination of Lys-118 gives a specific tag for epigenetic transcriptional activation and is also prerequisite for histone H3 'Lys-4' and 'Lys-79' methylation. In terms of processing, glcNAcylation at Ser-110 promotes monoubiquitination of Lys-118. It fluctuates in response to extracellular glucose, and associates with transcribed genes.

The protein resides in the nucleus. Its subcellular location is the chromosome. In terms of biological role, core component of nucleosome. Nucleosomes wrap and compact DNA into chromatin, limiting DNA accessibility to the cellular machineries which require DNA as a template. Histones thereby play a central role in transcription regulation, DNA repair, DNA replication and chromosomal stability. DNA accessibility is regulated via a complex set of post-translational modifications of histones, also called histone code, and nucleosome remodeling. The chain is Histone H2B.1, embryonic from Psammechinus miliaris (Green sea urchin).